Reading from the N-terminus, the 204-residue chain is Serotype 3 fimbrial subunit (204 aa).

The N-terminal stretch at 1-25 (MSKFSYPALRAALILAASPVLPALA) is a signal peptide. Cysteines 41 and 84 form a disulfide.

Belongs to the fimbrial protein family.

It is found in the fimbrium. In terms of biological role, bordetella pertussis is the causative agent of whooping cough. An essential step in the disease process is the attachment of the bacteria to the ciliated epithelium of the respiratory tract, enabling the organism to resist normal host-clearance mechanisms. It is unclear which bacterial cell surface component are responsible for adherence but the fimbriae of B.pertussis are prime candidates for being involved in this process. In Bordetella pertussis (strain Tohama I / ATCC BAA-589 / NCTC 13251), this protein is Serotype 3 fimbrial subunit (fim3).